Consider the following 736-residue polypeptide: Transcription factor E2F8 (736 aa).

A disordered region spans residues 1–26 (MEEGSKENCGFNGSPMGSRSPPKQLT). A compositionally biased stretch (polar residues) spans 15–26 (PMGSRSPPKQLT). DNA-binding regions lie at residues 98–167 (RKEK…IWHG) and 240–326 (RKEK…QWTC). Disordered regions lie at residues 386-405 (RRKI…GSSS), 435-456 (SACK…QTPT), 483-551 (EQTL…AVDD), and 716-736 (PGGM…GTDD). Low complexity predominate over residues 393-405 (PSSPIKSGDGSSS). Basic and acidic residues-rich tracts occupy residues 509 to 539 (GRHE…DRGC) and 726 to 736 (SARKLDVGTDD).

This sequence belongs to the E2F/DP family. Homodimer and heterodimer: mainly forms homodimers and, to a lesser extent, heterodimers with e2f7.

It is found in the nucleus. In terms of biological role, atypical E2F transcription factor that participates in various processes such as angiogenesis and polyploidization of specialized cells. Mainly acts as a transcription repressor that binds DNA independently of DP proteins and specifically recognizes the E2 recognition site 5'-TTTC[CG]CGC-3'. Directly represses transcription of classical E2F transcription factors such as e2f1. Acts as a regulator of S-phase by recognizing and binding the E2-related site 5'-TTCCCGCC-3' and mediating repression of G1/S-regulated genes. Acts as a promoter of sprouting angiogenesis, possibly by acting as a transcription activator. The chain is Transcription factor E2F8 (e2f8) from Xenopus tropicalis (Western clawed frog).